A 431-amino-acid chain; its full sequence is Enolase (431 aa).

(2R)-2-phosphoglycerate is bound at residue Gln167. Glu209 functions as the Proton donor in the catalytic mechanism. Mg(2+) contacts are provided by Asp246, Glu290, and Asp317. The (2R)-2-phosphoglycerate site is built by Lys342, Arg371, Ser372, and Lys393. The Proton acceptor role is filled by Lys342.

It belongs to the enolase family. As to quaternary structure, component of the RNA degradosome, a multiprotein complex involved in RNA processing and mRNA degradation. Mg(2+) serves as cofactor.

Its subcellular location is the cytoplasm. The protein resides in the secreted. It is found in the cell surface. It carries out the reaction (2R)-2-phosphoglycerate = phosphoenolpyruvate + H2O. It functions in the pathway carbohydrate degradation; glycolysis; pyruvate from D-glyceraldehyde 3-phosphate: step 4/5. Functionally, catalyzes the reversible conversion of 2-phosphoglycerate (2-PG) into phosphoenolpyruvate (PEP). It is essential for the degradation of carbohydrates via glycolysis. This chain is Enolase, found in Pectobacterium atrosepticum (strain SCRI 1043 / ATCC BAA-672) (Erwinia carotovora subsp. atroseptica).